Consider the following 615-residue polypeptide: Lipoprotein LpqB (615 aa).

The first 29 residues, 1-29, serve as a signal peptide directing secretion; that stretch reads MGADRGRGGRRRPARVVAYAVGGVVLLAG. Cysteine 30 carries the N-palmitoyl cysteine lipid modification. Residue cysteine 30 is the site of S-diacylglycerol cysteine attachment. The disordered stretch occupies residues 100 to 123; it reads PDESATVLAGGPGTESDHSGNRED. Residues 114–123 show a composition bias toward basic and acidic residues; sequence ESDHSGNRED.

The protein belongs to the LpqB lipoprotein family.

It is found in the cell membrane. This Streptomyces coelicolor (strain ATCC BAA-471 / A3(2) / M145) protein is Lipoprotein LpqB.